The sequence spans 73 residues: MGVFRCCLAAALVVVCLSRMGGTEPLESNHEDERRADDTSGDDCVDTNEDCVNWASTGQCEANPSYMRENCRK.

The signal sequence occupies residues 1–17; that stretch reads MGVFRCCLAAALVVVCL. A propeptide spanning residues 18–35 is cleaved from the precursor; sequence SRMGGTEPLESNHEDERR. A disordered region spans residues 22–42; the sequence is GTEPLESNHEDERRADDTSGD. Positions 27-38 are enriched in basic and acidic residues; sequence ESNHEDERRADD. A ShKT domain is found at 44 to 73; that stretch reads CVDTNEDCVNWASTGQCEANPSYMRENCRK.

Contain 2 disulfide bonds. Expressed by the venom duct.

Its subcellular location is the secreted. Probable neurotoxin. The sequence is that of Conotoxin Im14.3 from Conus imperialis (Imperial cone).